The following is a 447-amino-acid chain: UDP-glycosyltransferase 76E3 (447 aa).

UDP-alpha-D-glucose is bound by residues Ser269, 328 to 330 (APQ), 345 to 353 (HCGWNSTLE), and 367 to 370 (QGEQ).

The protein belongs to the UDP-glycosyltransferase family.

The protein is UDP-glycosyltransferase 76E3 (UGT76E3) of Arabidopsis thaliana (Mouse-ear cress).